The following is a 208-amino-acid chain: ATP phosphoribosyltransferase (208 aa).

Belongs to the ATP phosphoribosyltransferase family. Short subfamily. Heteromultimer composed of HisG and HisZ subunits.

The protein resides in the cytoplasm. The enzyme catalyses 1-(5-phospho-beta-D-ribosyl)-ATP + diphosphate = 5-phospho-alpha-D-ribose 1-diphosphate + ATP. It participates in amino-acid biosynthesis; L-histidine biosynthesis; L-histidine from 5-phospho-alpha-D-ribose 1-diphosphate: step 1/9. Functionally, catalyzes the condensation of ATP and 5-phosphoribose 1-diphosphate to form N'-(5'-phosphoribosyl)-ATP (PR-ATP). Has a crucial role in the pathway because the rate of histidine biosynthesis seems to be controlled primarily by regulation of HisG enzymatic activity. This Oceanobacillus iheyensis (strain DSM 14371 / CIP 107618 / JCM 11309 / KCTC 3954 / HTE831) protein is ATP phosphoribosyltransferase.